The chain runs to 290 residues: NAD kinase (290 aa).

Asp73 serves as the catalytic Proton acceptor. Residues 73–74 (DG), 147–148 (ND), Arg158, Arg175, Asp177, 188–193 (TAYALS), and Gln246 contribute to the NAD(+) site.

The protein belongs to the NAD kinase family. It depends on a divalent metal cation as a cofactor.

The protein resides in the cytoplasm. The enzyme catalyses NAD(+) + ATP = ADP + NADP(+) + H(+). In terms of biological role, involved in the regulation of the intracellular balance of NAD and NADP, and is a key enzyme in the biosynthesis of NADP. Catalyzes specifically the phosphorylation on 2'-hydroxyl of the adenosine moiety of NAD to yield NADP. In Thiobacillus denitrificans (strain ATCC 25259 / T1), this protein is NAD kinase.